We begin with the raw amino-acid sequence, 364 residues long: Alanine racemase (364 aa).

Lys35 functions as the Proton acceptor; specific for D-alanine in the catalytic mechanism. Lys35 is modified (N6-(pyridoxal phosphate)lysine). Arg131 lines the substrate pocket. Residue Tyr256 is the Proton acceptor; specific for L-alanine of the active site. Met304 serves as a coordination point for substrate.

Belongs to the alanine racemase family. It depends on pyridoxal 5'-phosphate as a cofactor.

The enzyme catalyses L-alanine = D-alanine. It participates in amino-acid biosynthesis; D-alanine biosynthesis; D-alanine from L-alanine: step 1/1. Functionally, catalyzes the interconversion of L-alanine and D-alanine. May also act on other amino acids. The protein is Alanine racemase (alr) of Halorhodospira halophila (strain DSM 244 / SL1) (Ectothiorhodospira halophila (strain DSM 244 / SL1)).